A 257-amino-acid polypeptide reads, in one-letter code: Mitochondrial distribution and morphology protein 12 (257 aa).

Residues 1-256 form the SMP-LTD domain; the sequence is MSFEINWEKL…WPSWVNLDFN (256 aa). Residues 74–98 are disordered; sequence YEEDNETSSEMHGRDGQNVGESGEE.

This sequence belongs to the MDM12 family. In terms of assembly, component of the ER-mitochondria encounter structure (ERMES) or MDM complex, composed of MMM1, MDM10, MDM12 and MDM34. An MMM1 homodimer associates with one molecule of MDM12 on each side in a pairwise head-to-tail manner, and the SMP-LTD domains of MMM1 and MDM12 generate a continuous hydrophobic tunnel for phospholipid trafficking.

It localises to the mitochondrion outer membrane. Its subcellular location is the endoplasmic reticulum membrane. In terms of biological role, component of the ERMES/MDM complex, which serves as a molecular tether to connect the endoplasmic reticulum (ER) and mitochondria. Components of this complex are involved in the control of mitochondrial shape and protein biogenesis, and function in nonvesicular lipid trafficking between the ER and mitochondria. MDM12 is required for the interaction of the ER-resident membrane protein MMM1 and the outer mitochondrial membrane-resident beta-barrel protein MDM10. The MDM12-MMM1 subcomplex functions in the major beta-barrel assembly pathway that is responsible for biogenesis of all mitochondrial outer membrane beta-barrel proteins, and acts in a late step after the SAM complex. The MDM10-MDM12-MMM1 subcomplex further acts in the TOM40-specific pathway after the action of the MDM12-MMM1 complex. Essential for establishing and maintaining the structure of mitochondria and maintenance of mtDNA nucleoids. The chain is Mitochondrial distribution and morphology protein 12 from Candida glabrata (strain ATCC 2001 / BCRC 20586 / JCM 3761 / NBRC 0622 / NRRL Y-65 / CBS 138) (Yeast).